Reading from the N-terminus, the 404-residue chain is Serine/threonine transporter SstT (404 aa).

A run of 8 helical transmembrane segments spans residues 10 to 30 (ILGG…ICLA), 53 to 73 (AIAP…KEVG), 81 to 101 (ILVM…ILSY), 140 to 160 (AITN…GIAL), 177 to 197 (AVSF…FGLV), 215 to 235 (LLAV…PLLV), 287 to 307 (IAIP…ITVL), and 329 to 349 (IVAS…LLLI).

The protein belongs to the dicarboxylate/amino acid:cation symporter (DAACS) (TC 2.A.23) family.

The protein localises to the cell inner membrane. It catalyses the reaction L-serine(in) + Na(+)(in) = L-serine(out) + Na(+)(out). The enzyme catalyses L-threonine(in) + Na(+)(in) = L-threonine(out) + Na(+)(out). In terms of biological role, involved in the import of serine and threonine into the cell, with the concomitant import of sodium (symport system). The sequence is that of Serine/threonine transporter SstT from Glaesserella parasuis serovar 5 (strain SH0165) (Haemophilus parasuis).